Consider the following 227-residue polypeptide: Ribose-5-phosphate isomerase A (227 aa).

Substrate-binding positions include 26 to 29 (TGST), 82 to 85 (DGAD), and 95 to 98 (KGGG). Glu-104 functions as the Proton acceptor in the catalytic mechanism. Lys-122 is a substrate binding site.

Belongs to the ribose 5-phosphate isomerase family. Homodimer.

It carries out the reaction aldehydo-D-ribose 5-phosphate = D-ribulose 5-phosphate. It participates in carbohydrate degradation; pentose phosphate pathway; D-ribose 5-phosphate from D-ribulose 5-phosphate (non-oxidative stage): step 1/1. Its function is as follows. Catalyzes the reversible conversion of ribose-5-phosphate to ribulose 5-phosphate. The polypeptide is Ribose-5-phosphate isomerase A (Streptococcus pyogenes serotype M5 (strain Manfredo)).